The primary structure comprises 293 residues: Phosphatidylserine decarboxylase proenzyme (293 aa).

Active-site charge relay system; for autoendoproteolytic cleavage activity residues include aspartate 90, histidine 147, and serine 254. Serine 254 (schiff-base intermediate with substrate; via pyruvic acid; for decarboxylase activity) is an active-site residue. The residue at position 254 (serine 254) is a Pyruvic acid (Ser); by autocatalysis.

Belongs to the phosphatidylserine decarboxylase family. PSD-B subfamily. Prokaryotic type I sub-subfamily. As to quaternary structure, heterodimer of a large membrane-associated beta subunit and a small pyruvoyl-containing alpha subunit. The cofactor is pyruvate. In terms of processing, is synthesized initially as an inactive proenzyme. Formation of the active enzyme involves a self-maturation process in which the active site pyruvoyl group is generated from an internal serine residue via an autocatalytic post-translational modification. Two non-identical subunits are generated from the proenzyme in this reaction, and the pyruvate is formed at the N-terminus of the alpha chain, which is derived from the carboxyl end of the proenzyme. The autoendoproteolytic cleavage occurs by a canonical serine protease mechanism, in which the side chain hydroxyl group of the serine supplies its oxygen atom to form the C-terminus of the beta chain, while the remainder of the serine residue undergoes an oxidative deamination to produce ammonia and the pyruvoyl prosthetic group on the alpha chain. During this reaction, the Ser that is part of the protease active site of the proenzyme becomes the pyruvoyl prosthetic group, which constitutes an essential element of the active site of the mature decarboxylase.

It localises to the cell membrane. The enzyme catalyses a 1,2-diacyl-sn-glycero-3-phospho-L-serine + H(+) = a 1,2-diacyl-sn-glycero-3-phosphoethanolamine + CO2. It functions in the pathway phospholipid metabolism; phosphatidylethanolamine biosynthesis; phosphatidylethanolamine from CDP-diacylglycerol: step 2/2. Catalyzes the formation of phosphatidylethanolamine (PtdEtn) from phosphatidylserine (PtdSer). This Yersinia enterocolitica serotype O:8 / biotype 1B (strain NCTC 13174 / 8081) protein is Phosphatidylserine decarboxylase proenzyme.